Consider the following 302-residue polypeptide: Urease accessory protein UreD 2 (302 aa).

It belongs to the UreD family. UreD, UreF and UreG form a complex that acts as a GTP-hydrolysis-dependent molecular chaperone, activating the urease apoprotein by helping to assemble the nickel containing metallocenter of UreC. The UreE protein probably delivers the nickel.

It is found in the cytoplasm. Functionally, required for maturation of urease via the functional incorporation of the urease nickel metallocenter. The protein is Urease accessory protein UreD 2 of Brucella canis (strain ATCC 23365 / NCTC 10854 / RM-666).